The chain runs to 343 residues: UDP-N-acetylglucosamine--N-acetylmuramyl-(pentapeptide) pyrophosphoryl-undecaprenol N-acetylglucosamine transferase (343 aa).

UDP-N-acetyl-alpha-D-glucosamine is bound by residues 10–12 (TGG), N113, S174, and Q275.

The protein belongs to the glycosyltransferase 28 family. MurG subfamily.

The protein localises to the cell membrane. It carries out the reaction di-trans,octa-cis-undecaprenyl diphospho-N-acetyl-alpha-D-muramoyl-L-alanyl-D-glutamyl-meso-2,6-diaminopimeloyl-D-alanyl-D-alanine + UDP-N-acetyl-alpha-D-glucosamine = di-trans,octa-cis-undecaprenyl diphospho-[N-acetyl-alpha-D-glucosaminyl-(1-&gt;4)]-N-acetyl-alpha-D-muramoyl-L-alanyl-D-glutamyl-meso-2,6-diaminopimeloyl-D-alanyl-D-alanine + UDP + H(+). It participates in cell wall biogenesis; peptidoglycan biosynthesis. Its function is as follows. Cell wall formation. Catalyzes the transfer of a GlcNAc subunit on undecaprenyl-pyrophosphoryl-MurNAc-pentapeptide (lipid intermediate I) to form undecaprenyl-pyrophosphoryl-MurNAc-(pentapeptide)GlcNAc (lipid intermediate II). This is UDP-N-acetylglucosamine--N-acetylmuramyl-(pentapeptide) pyrophosphoryl-undecaprenol N-acetylglucosamine transferase from Wolbachia sp. subsp. Brugia malayi (strain TRS).